The primary structure comprises 213 residues: Orotate phosphoribosyltransferase (213 aa).

Lys-26 is a 5-phospho-alpha-D-ribose 1-diphosphate binding site. Position 34-35 (34-35) interacts with orotate; it reads FF. 5-phospho-alpha-D-ribose 1-diphosphate contacts are provided by residues 72–73, Arg-99, Lys-100, Lys-103, His-105, and 124–132; these read YK and DDVITAGTA. Positions 128 and 156 each coordinate orotate.

It belongs to the purine/pyrimidine phosphoribosyltransferase family. PyrE subfamily. In terms of assembly, homodimer. Mg(2+) serves as cofactor.

The enzyme catalyses orotidine 5'-phosphate + diphosphate = orotate + 5-phospho-alpha-D-ribose 1-diphosphate. The protein operates within pyrimidine metabolism; UMP biosynthesis via de novo pathway; UMP from orotate: step 1/2. Catalyzes the transfer of a ribosyl phosphate group from 5-phosphoribose 1-diphosphate to orotate, leading to the formation of orotidine monophosphate (OMP). The chain is Orotate phosphoribosyltransferase from Shigella flexneri serotype 5b (strain 8401).